Reading from the N-terminus, the 603-residue chain is MCSISQKVVIGLNKAAANNCLQNLDRRGFKTRRVSSSEAASCLRASSSLQLDVKPVEEGRRSGNYQPSIWDFNYVQSLNTPYKEERYLTRHAELIVQVKPLLEKKMEATQQLELIDDLNNLGLSYFFQDRIKQILSFIYDENQCFHSNINDQAEKRDLYFTALGFRLLRQHGFNVSQEVFDCFKNDKGSDFKASLSGNTKGLLQLYEASFLVREGEDTLELARQFATKFLRRKLDEIDDNHLLSRIHHSLEIPLHWRIQRLEARWFLDAYATRHDMNPIILELAKLDFNIIQATHQEELKDVSRWWQNTRLAEKLPFVRDRLVESYFWAIALFEPHQYGYQRRVAAKIITLATSIDDVYDIYGTLDELQLFTDNFRRWDTESLGGLPYSMQLFYMVIHNFVSELAYEILKEKGFIAIPYLQRSWVDLAESFLKEANWYYSGYTPSLEEYIDNGSISIGAVAVLSQVYFTLANSIEKPKIESMYKYHHILRLSGLLVRLHDDLGTSLFEKKRGDVPKAVEICMKERNDTEEEAEEHVKYLIREAWKEMNTATAAAGCPFMDELNVAAANLGRAAQFVYLDGDGHGVQHSKIHQQMGGLMFKPYV.

The transit peptide at 1-35 (MCSISQKVVIGLNKAAANNCLQNLDRRGFKTRRVS) directs the protein to the chloroplast. Residues Arg-319, Asp-356, Asp-360, Arg-497, and Asp-500 each coordinate (2E)-geranyl diphosphate. Mg(2+)-binding residues include Asp-356 and Asp-360. Positions 356-360 (DDVYD) match the DDXXD motif motif. Mg(2+)-binding residues include Asp-500, Thr-504, and Glu-508.

The protein belongs to the terpene synthase family. Tpsb subfamily. As to quaternary structure, monomer. Requires Mg(2+) as cofactor. Mn(2+) is required as a cofactor.

The protein localises to the plastid. It localises to the chloroplast. It catalyses the reaction (2E)-geranyl diphosphate + H2O = (2E)-geraniol + diphosphate. The protein operates within secondary metabolite biosynthesis; terpenoid biosynthesis. Monoterpene synthase (mono-TPS) involved in the biosynthesis of monoterpenes natural products. Catalyzes the conversion of (2E)-geranyl diphosphate (GPP) into geraniol. The polypeptide is Geraniol synthase Tps-5031G8, chloroplastic (Perilla frutescens var. hirtella (Perilla citriodora)).